Here is a 128-residue protein sequence, read N- to C-terminus: Fluoride-specific ion channel FluC (128 aa).

The next 4 membrane-spanning stretches (helical) occupy residues 5–25, 35–55, 67–87, and 96–116; these read IVAIFVGAGLGALLRWFLSLA, LGTLASNLIGGYVIGVAAVVF, LFVITGFLGGLTTFSTYSVEV, and FGWALAVAALHLTGSFALTAL. Gly-75 and Thr-78 together coordinate Na(+).

The protein belongs to the fluoride channel Fluc/FEX (TC 1.A.43) family.

The protein resides in the cell inner membrane. The catalysed reaction is fluoride(in) = fluoride(out). With respect to regulation, na(+) is not transported, but it plays an essential structural role and its presence is essential for fluoride channel function. In terms of biological role, fluoride-specific ion channel. Important for reducing fluoride concentration in the cell, thus reducing its toxicity. The polypeptide is Fluoride-specific ion channel FluC (Burkholderia orbicola (strain MC0-3)).